The following is a 465-amino-acid chain: UDP-N-acetylmuramoylalanine--D-glutamate ligase (465 aa).

127–133 provides a ligand contact to ATP; the sequence is GSNGKST.

The protein belongs to the MurCDEF family.

It localises to the cytoplasm. The catalysed reaction is UDP-N-acetyl-alpha-D-muramoyl-L-alanine + D-glutamate + ATP = UDP-N-acetyl-alpha-D-muramoyl-L-alanyl-D-glutamate + ADP + phosphate + H(+). It participates in cell wall biogenesis; peptidoglycan biosynthesis. Its function is as follows. Cell wall formation. Catalyzes the addition of glutamate to the nucleotide precursor UDP-N-acetylmuramoyl-L-alanine (UMA). The protein is UDP-N-acetylmuramoylalanine--D-glutamate ligase of Cereibacter sphaeroides (strain ATCC 17023 / DSM 158 / JCM 6121 / CCUG 31486 / LMG 2827 / NBRC 12203 / NCIMB 8253 / ATH 2.4.1.) (Rhodobacter sphaeroides).